The sequence spans 98 residues: Ribonuclease P protein component 4 (98 aa).

Residues cysteine 62, cysteine 65, cysteine 85, and cysteine 88 each coordinate Zn(2+).

This sequence belongs to the eukaryotic/archaeal RNase P protein component 4 family. In terms of assembly, consists of a catalytic RNA component and at least 4-5 protein subunits. It depends on Zn(2+) as a cofactor.

Its subcellular location is the cytoplasm. The catalysed reaction is Endonucleolytic cleavage of RNA, removing 5'-extranucleotides from tRNA precursor.. Part of ribonuclease P, a protein complex that generates mature tRNA molecules by cleaving their 5'-ends. The protein is Ribonuclease P protein component 4 of Thermoplasma volcanium (strain ATCC 51530 / DSM 4299 / JCM 9571 / NBRC 15438 / GSS1).